Reading from the N-terminus, the 73-residue chain is Toxin Td9 (73 aa).

Residues 1-7 (IGMVAEC) form the signal peptide. The LCN-type CS-alpha/beta domain maps to 8–70 (KDGYLVGDDG…IWNSATNSCG (63 aa)). 4 disulfides stabilise this stretch: C18–C69, C22–C44, C30–C50, and C34–C52. A Lysine amide modification is found at K71.

The protein belongs to the long (4 C-C) scorpion toxin superfamily. Sodium channel inhibitor family. Beta subfamily. As to expression, expressed by the venom gland.

The protein localises to the secreted. Beta toxins bind voltage-independently at site-4 of sodium channels (Nav) and shift the voltage of activation toward more negative potentials thereby affecting sodium channel activation and promoting spontaneous and repetitive firing. This Tityus discrepans (Venezuelan scorpion) protein is Toxin Td9.